Here is a 108-residue protein sequence, read N- to C-terminus: Tetrahydromethanopterin S-methyltransferase subunit B (108 aa).

Residues 79 to 99 form a helical membrane-spanning segment; the sequence is GMFFGFWVTMAILVLVTILAV.

Belongs to the MtrB family. In terms of assembly, the complex is composed of 8 subunits; MtrA, MtrB, MtrC, MtrD, MtrE, MtrF, MtrG and MtrH.

It is found in the cell membrane. It carries out the reaction 5-methyl-5,6,7,8-tetrahydromethanopterin + coenzyme M + 2 Na(+)(in) = 5,6,7,8-tetrahydromethanopterin + methyl-coenzyme M + 2 Na(+)(out). It functions in the pathway one-carbon metabolism; methanogenesis from CO(2); methyl-coenzyme M from 5,10-methylene-5,6,7,8-tetrahydromethanopterin: step 2/2. Part of a complex that catalyzes the formation of methyl-coenzyme M and tetrahydromethanopterin from coenzyme M and methyl-tetrahydromethanopterin. This is an energy-conserving, sodium-ion translocating step. The chain is Tetrahydromethanopterin S-methyltransferase subunit B from Methanococcus maripaludis (strain C7 / ATCC BAA-1331).